A 59-amino-acid chain; its full sequence is Large ribosomal subunit protein bL32 (59 aa).

The segment at 1-59 (MAVQQNKKSPSKRGMHRAHDFLTAPVIAIEPSTGEAHRRHHISPNGFYRGRKVVKGKDE) is disordered. A compositionally biased stretch (basic residues) spans 49-59 (RGRKVVKGKDE).

It belongs to the bacterial ribosomal protein bL32 family.

The protein is Large ribosomal subunit protein bL32 of Laribacter hongkongensis (strain HLHK9).